Reading from the N-terminus, the 146-residue chain is Snaclec echicetin subunit beta (146 aa).

The N-terminal stretch at 1-23 (MGRFISVSFGLLVLLLSLSGTGA) is a signal peptide. 3 cysteine pairs are disulfide-bonded: cysteine 25–cysteine 36, cysteine 53–cysteine 142, and cysteine 119–cysteine 134. Residues 32 to 143 (YEGYCYKVFK…CTWTFSFVCK (112 aa)) enclose the C-type lectin domain.

It belongs to the snaclec family. In terms of assembly, heterodimer of subunits alpha and beta; disulfide-linked. Expressed by the venom gland.

The protein localises to the secreted. Functionally, binding of echicetin to glycoprotein Ibalpha (GP1BA) receptor on platelets alone results in inhibition of platelet aggregation, while binding to both GPIba receptor and IgMk promotes platelet aggregation and signal transduction. The chain is Snaclec echicetin subunit beta from Echis carinatus (Saw-scaled viper).